The following is a 47-amino-acid chain: Photosystem II reaction center protein K (47 aa).

Residues 1–10 (MAAFSLDLLA) constitute a propeptide that is removed on maturation. Residues 19-39 (FGPLIDILPIIPVFFLLLAFV) traverse the membrane as a helical segment.

It belongs to the PsbK family. PSII is composed of 1 copy each of membrane proteins PsbA, PsbB, PsbC, PsbD, PsbE, PsbF, PsbH, PsbI, PsbJ, PsbK, PsbL, PsbM, PsbT, PsbX, PsbY, PsbZ, Psb30/Ycf12, peripheral proteins PsbO, CyanoQ (PsbQ), PsbU, PsbV and a large number of cofactors. It forms dimeric complexes.

It is found in the cellular thylakoid membrane. Its function is as follows. One of the components of the core complex of photosystem II (PSII). PSII is a light-driven water:plastoquinone oxidoreductase that uses light energy to abstract electrons from H(2)O, generating O(2) and a proton gradient subsequently used for ATP formation. It consists of a core antenna complex that captures photons, and an electron transfer chain that converts photonic excitation into a charge separation. The sequence is that of Photosystem II reaction center protein K from Synechococcus sp. (strain WH7803).